Reading from the N-terminus, the 116-residue chain is NADH-ubiquinone oxidoreductase chain 3 (116 aa).

3 helical membrane-spanning segments follow: residues 3–23, 56–76, and 85–105; these read LITTIIAITITLSAVLATVSF, FFLIAILFLLFDLEIALLLPL, and PALTLAWSAAVLALLTLGLIY.

It belongs to the complex I subunit 3 family.

Its subcellular location is the mitochondrion membrane. The catalysed reaction is a ubiquinone + NADH + 5 H(+)(in) = a ubiquinol + NAD(+) + 4 H(+)(out). Its function is as follows. Core subunit of the mitochondrial membrane respiratory chain NADH dehydrogenase (Complex I) that is believed to belong to the minimal assembly required for catalysis. Complex I functions in the transfer of electrons from NADH to the respiratory chain. The immediate electron acceptor for the enzyme is believed to be ubiquinone. This chain is NADH-ubiquinone oxidoreductase chain 3 (MT-ND3), found in Salmo trutta (Brown trout).